A 278-amino-acid chain; its full sequence is NADPH-dependent 7-cyano-7-deazaguanine reductase (278 aa).

Substrate is bound at residue 87–89; the sequence is IES. Position 89-90 (89-90) interacts with NADPH; sequence SK. The active-site Thioimide intermediate is cysteine 185. The Proton donor role is filled by aspartate 192. Residue 224–225 coordinates substrate; that stretch reads HE. 253 to 254 contributes to the NADPH binding site; the sequence is RG. Positions 255–278 are disordered; the sequence is GLDINPYRSTNPTFSVQNHRSFRQ. Polar residues predominate over residues 261–278; it reads YRSTNPTFSVQNHRSFRQ.

Belongs to the GTP cyclohydrolase I family. QueF type 2 subfamily. Homodimer.

It is found in the cytoplasm. The enzyme catalyses 7-aminomethyl-7-carbaguanine + 2 NADP(+) = 7-cyano-7-deazaguanine + 2 NADPH + 3 H(+). It participates in tRNA modification; tRNA-queuosine biosynthesis. Its function is as follows. Catalyzes the NADPH-dependent reduction of 7-cyano-7-deazaguanine (preQ0) to 7-aminomethyl-7-deazaguanine (preQ1). The chain is NADPH-dependent 7-cyano-7-deazaguanine reductase from Coxiella burnetii (strain CbuG_Q212) (Coxiella burnetii (strain Q212)).